A 338-amino-acid polypeptide reads, in one-letter code: Beta-ketoacyl-[acyl-carrier-protein] synthase III (338 aa).

Active-site residues include Cys119 and His261. An ACP-binding region spans residues 262-266; that stretch reads QANQR. Asn291 is an active-site residue.

The protein belongs to the thiolase-like superfamily. FabH family. As to quaternary structure, homodimer.

It localises to the cytoplasm. The enzyme catalyses malonyl-[ACP] + acetyl-CoA + H(+) = 3-oxobutanoyl-[ACP] + CO2 + CoA. It functions in the pathway lipid metabolism; fatty acid biosynthesis. In terms of biological role, catalyzes the condensation reaction of fatty acid synthesis by the addition to an acyl acceptor of two carbons from malonyl-ACP. Catalyzes the first condensation reaction which initiates fatty acid synthesis and may therefore play a role in governing the total rate of fatty acid production. Possesses both acetoacetyl-ACP synthase and acetyl transacylase activities. Its substrate specificity determines the biosynthesis of branched-chain and/or straight-chain of fatty acids. The polypeptide is Beta-ketoacyl-[acyl-carrier-protein] synthase III (Prochlorococcus marinus (strain NATL2A)).